The following is a 136-amino-acid chain: Histone H3.3C (136 aa).

The segment at 1–42 (MARTKQTARKSTGGKAPRKQLVTKAAKKCAPATGGVKKPHRY) is disordered. An Asymmetric dimethylarginine; by PRMT6 modification is found at R3. The residue at position 4 (T4) is a Phosphothreonine; by HASPIN. Residue K5 is modified to Allysine; alternate. At K5 the chain carries N6,N6,N6-trimethyllysine; alternate. The residue at position 5 (K5) is an N6,N6-dimethyllysine; alternate. K5 is modified (N6-(2-hydroxyisobutyryl)lysine; alternate). At K5 the chain carries N6-acetyllysine; alternate. An N6-methyllysine; alternate modification is found at K5. A 5-glutamyl dopamine; alternate modification is found at Q6. Residue Q6 is modified to 5-glutamyl serotonin; alternate. The residue at position 7 (T7) is a Phosphothreonine; by PKC. An N6-(2-hydroxyisobutyryl)lysine; alternate modification is found at K10. Position 10 is an N6-lactoyllysine; alternate (K10). K10 is subject to N6-methylated lysine. S11 carries the ADP-ribosylserine; alternate modification. A Phosphoserine; alternate; by AURKB, AURKC, RPS6KA3, RPS6KA4 and RPS6KA5 modification is found at S11. T12 carries the phosphothreonine; by PKC modification. K15 is subject to N6-(2-hydroxyisobutyryl)lysine; alternate. N6-lactoyllysine; alternate is present on K15. Position 15 is an N6-acetyllysine (K15). Residue K15 is modified to N6-glutaryllysine; alternate. An Asymmetric dimethylarginine modification is found at R18. K19, K24, K28, and K37 each carry N6-(2-hydroxyisobutyryl)lysine; alternate. K19 is modified (N6-acetyllysine; alternate). N6-lactoyllysine; alternate occurs at positions 19, 24, and 28. 3 positions are modified to N6-glutaryllysine; alternate: K19, K24, and K28. An N6-butyryllysine; alternate mark is found at K19 and K24. N6-methylated lysine; alternate is present on K19. K24 carries the post-translational modification N6-acetyllysine. 2 positions are modified to N6-acetyllysine; alternate: K28 and K37. 2 positions are modified to N6-methylated lysine; alternate: K28 and K37. Y42 carries the post-translational modification Phosphotyrosine. Residue K57 is modified to N6-(2-hydroxyisobutyryl)lysine; alternate. An N6-lactoyllysine; alternate modification is found at K57. K57 carries the N6-glutaryllysine; alternate modification. The residue at position 57 (K57) is an N6-succinyllysine; alternate. Phosphoserine is present on S58. K65 and K80 each carry N6-(2-hydroxyisobutyryl)lysine; alternate. K65 and K80 each carry N6-methylated lysine. K80 carries the N6-lactoyllysine; alternate modification. K80 carries the post-translational modification N6-glutaryllysine; alternate. K80 is modified (N6-succinyllysine; alternate). T81 bears the Phosphothreonine mark. N6-acetyllysine; alternate occurs at positions 116 and 123. Residues K116 and K123 each carry the N6-glutaryllysine; alternate modification. An N6-(2-hydroxyisobutyryl)lysine; alternate modification is found at K123. N6-methylated lysine; alternate is present on K123. Residue K123 is modified to N6-succinyllysine; alternate.

This sequence belongs to the histone H3 family. As to quaternary structure, the nucleosome is a histone octamer containing two molecules each of H2A, H2B, H3 and H4 assembled in one H3-H4 heterotetramer and two H2A-H2B heterodimers. The octamer wraps approximately 147 bp of DNA. Post-translationally, acetylation is generally linked to gene activation. Acetylation on Lys-19 (H3K18ac) and Lys-24 (H3K24ac) favors methylation at Arg-18 (H3R17me). Acetylation at Lys-123 (H3K122ac) by EP300/p300 plays a central role in chromatin structure: localizes at the surface of the histone octamer and stimulates transcription, possibly by promoting nucleosome instability. In terms of processing, asymmetric dimethylation at Arg-18 (H3R17me2a) is linked to gene activation. Asymmetric dimethylation at Arg-3 (H3R2me2a) by PRMT6 is linked to gene repression and is mutually exclusive with H3 Lys-5 methylation (H3K4me2 and H3K4me3). H3R2me2a is present at the 3' of genes regardless of their transcription state and is enriched on inactive promoters, while it is absent on active promoters. Methylation at Lys-5 (H3K4me) and Lys-80 (H3K79me) are linked to gene activation. Methylation at Lys-5 (H3K4me) facilitates subsequent acetylation of H3 and H4. Methylation at Lys-80 (H3K79me) is associated with DNA double-strand break (DSB) responses and is a specific target for TP53BP1. Methylation at Lys-10 (H3K9me) and Lys-28 (H3K27me) are linked to gene repression. Methylation at Lys-10 (H3K9me) is a specific target for HP1 proteins (CBX1, CBX3 and CBX5) and prevents subsequent phosphorylation at Ser-11 (H3S10ph) and acetylation of H3 and H4. Methylation at Lys-5 (H3K4me) and Lys-80 (H3K79me) require preliminary monoubiquitination of H2B at 'Lys-120'. Post-translationally, phosphorylated at Thr-4 (H3T3ph) by HASPIN during prophase and dephosphorylated during anaphase. Phosphorylation at Ser-11 (H3S10ph) by aurkb is crucial for chromosome condensation and cell-cycle progression during mitosis and meiosis. In addition phosphorylation at Ser-11 (H3S10ph) by rps6ka4 and rps6ka5 is important during interphase because it enables the transcription of genes following external stimulation, like mitogens, stress, growth factors or UV irradiation and result in the activation of genes, such as c-fos and c-jun. Phosphorylation at Ser-11 (H3S10ph), which is linked to gene activation, prevents methylation at Lys-10 (H3K9me) but facilitates acetylation of H3 and H4. Phosphorylation at Ser-11 (H3S10ph) by aurkb mediates the dissociation of HP1 proteins (cbx1, cbx3 and cbx5) from heterochromatin. Phosphorylation at Ser-11 (H3S10ph) is also an essential regulatory mechanism for neoplastic cell transformation. Phosphorylation at Thr-7 (H3T6ph) by prkcb is a specific tag for epigenetic transcriptional activation that prevents demethylation of Lys-5 (H3K4me) by lsd1/kdm1a. At centromeres, specifically phosphorylated at Thr-12 (H3T11ph) from prophase to early anaphase, by DAPK3 and PKN1. Phosphorylation at Thr-12 (H3T11ph) by PKN1 or isoform M2 of PKM (PKM2) is a specific tag for epigenetic transcriptional activation that promotes demethylation of Lys-10 (H3K9me) by kdm4c/jmjd2c. Phosphorylation at Tyr-42 (H3Y41ph) by jak2 promotes exclusion of cbx5 (HP1 alpha) from chromatin. In terms of processing, lysine deamination at Lys-5 (H3K4all) to form allysine only takes place on H3K4me3 and results in gene repression. Butyrylation of histones marks active promoters and competes with histone acetylation. It is present during late spermatogenesis. Post-translationally, succinylation at Lys-80 (H3K79succ) by KAT2A takes place with a maximum frequency around the transcription start sites of genes. It gives a specific tag for epigenetic transcription activation. Desuccinylation at Lys-123 (H3K122succ) by SIRT7 in response to DNA damage promotes chromatin condensation and double-strand breaks (DSBs) repair. In terms of processing, serine ADP-ribosylation constitutes the primary form of ADP-ribosylation of proteins in response to DNA damage. Serine ADP-ribosylation at Ser-11 (H3S10ADPr) is mutually exclusive with phosphorylation at Ser-11 (H3S10ph) and impairs acetylation at Lys-10 (H3K9ac).

The protein localises to the nucleus. The protein resides in the chromosome. Its function is as follows. Core component of nucleosome. Nucleosomes wrap and compact DNA into chromatin, limiting DNA accessibility to the cellular machineries which require DNA as a template. Histones thereby play a central role in transcription regulation, DNA repair, DNA replication and chromosomal stability. DNA accessibility is regulated via a complex set of post-translational modifications of histones, also called histone code, and nucleosome remodeling. This chain is Histone H3.3C (h3-5), found in Xenopus laevis (African clawed frog).